We begin with the raw amino-acid sequence, 499 residues long: Beta-amylase (499 aa).

3 residues coordinate substrate: Asp55, His95, and Asp103. Glu188 acts as the Proton donor in catalysis. Residues Lys298, His303, and Thr345 each contribute to the substrate site. The Proton acceptor role is filled by Glu383. Residues 384 to 385 (NA) and Arg423 contribute to the substrate site.

The protein belongs to the glycosyl hydrolase 14 family. In terms of assembly, homotetramer.

It carries out the reaction Hydrolysis of (1-&gt;4)-alpha-D-glucosidic linkages in polysaccharides so as to remove successive maltose units from the non-reducing ends of the chains.. The polypeptide is Beta-amylase (BMY1) (Ipomoea batatas (Sweet potato)).